Consider the following 395-residue polypeptide: Probable L-tyrosine/L-aspartate decarboxylase (395 aa).

N6-(pyridoxal phosphate)lysine is present on Lys242.

This sequence belongs to the group II decarboxylase family. MfnA subfamily. It depends on pyridoxal 5'-phosphate as a cofactor.

The catalysed reaction is L-tyrosine + H(+) = tyramine + CO2. It catalyses the reaction L-aspartate + H(+) = beta-alanine + CO2. It participates in cofactor biosynthesis; methanofuran biosynthesis. It functions in the pathway cofactor biosynthesis; coenzyme A biosynthesis. Functionally, catalyzes the decarboxylation of L-tyrosine to produce tyramine for methanofuran biosynthesis. Can also catalyze the decarboxylation of L-aspartate to produce beta-alanine for coenzyme A (CoA) biosynthesis. This chain is Probable L-tyrosine/L-aspartate decarboxylase, found in Methanosarcina barkeri (strain Fusaro / DSM 804).